We begin with the raw amino-acid sequence, 87 residues long: Large ribosomal subunit protein bL27 (87 aa).

The segment at 1–24 is disordered; the sequence is MAHKKGTGSTRNGRDSRSQRLGVK.

This sequence belongs to the bacterial ribosomal protein bL27 family.

In Crocosphaera subtropica (strain ATCC 51142 / BH68) (Cyanothece sp. (strain ATCC 51142)), this protein is Large ribosomal subunit protein bL27.